The following is a 491-amino-acid chain: Trigger factor (491 aa).

In terms of domain architecture, PPIase FKBP-type spans Gly-173–Pro-260. The disordered stretch occupies residues Met-435 to Asp-491. Residues Ala-463–Thr-475 show a composition bias toward low complexity.

It belongs to the FKBP-type PPIase family. Tig subfamily.

The protein localises to the cytoplasm. It carries out the reaction [protein]-peptidylproline (omega=180) = [protein]-peptidylproline (omega=0). Involved in protein export. Acts as a chaperone by maintaining the newly synthesized protein in an open conformation. Functions as a peptidyl-prolyl cis-trans isomerase. The polypeptide is Trigger factor (Synechococcus sp. (strain RCC307)).